The chain runs to 202 residues: NADH dehydrogenase [ubiquinone] iron-sulfur protein 7, mitochondrial (202 aa).

The transit peptide at 1–56 (MLRRTSFNFTGRAMISRGSPEWSHRLDLKKGKKTTMMHKLGTSKPNNALQYAQMTL) directs the protein to the mitochondrion. Residues Cys77, Cys78, Cys142, and Cys172 each coordinate [4Fe-4S] cluster.

It belongs to the complex I 20 kDa subunit family. As to quaternary structure, complex I is composed of 45 different subunits This is a component of the iron-sulfur (IP) fragment of the enzyme. The cofactor is [4Fe-4S] cluster.

The protein localises to the mitochondrion. The enzyme catalyses a ubiquinone + NADH + 5 H(+)(in) = a ubiquinol + NAD(+) + 4 H(+)(out). Its function is as follows. Core subunit of the mitochondrial membrane respiratory chain NADH dehydrogenase (Complex I) that is believed to belong to the minimal assembly required for catalysis. Complex I functions in the transfer of electrons from NADH to the respiratory chain. The immediate electron acceptor for the enzyme is believed to be ubiquinone. The polypeptide is NADH dehydrogenase [ubiquinone] iron-sulfur protein 7, mitochondrial (NDHK) (Trypanosoma brucei brucei).